We begin with the raw amino-acid sequence, 1240 residues long: Protein MMS22-like (1240 aa).

Over residues 1–11 the composition is skewed to polar residues; sequence MESEFSQSLTP. The interval 1–26 is disordered; the sequence is MESEFSQSLTPPVSPSALNHYGESAP.

The protein belongs to the MMS22 family. MMS22L subfamily. Component of the MMS22L-TONSL complex.

The protein localises to the nucleus. Its subcellular location is the chromosome. In terms of biological role, component of the MMS22L-TONSL complex, a complex that promotes homologous recombination-mediated repair of double-strand breaks (DSBs) at stalled or collapsed replication forks. The MMS22L-TONSL complex is required to maintain genome integrity during DNA replication. It mediates the assembly of RAD51 filaments on single-stranded DNA (ssDNA): the MMS22L-TONSL complex is recruited to DSBs following histone replacement by histone chaperones and eviction of the replication protein A complex (RPA/RP-A) from DSBs. Following recruitment to DSBs, the TONSL-MMS22L complex promotes recruitment of RAD51 filaments and subsequent homologous recombination. Within the complex, MMS22L acts by binding ssDNA. This chain is Protein MMS22-like (mms22l), found in Danio rerio (Zebrafish).